The following is a 476-amino-acid chain: Glycogen synthase (476 aa).

An ADP-alpha-D-glucose-binding site is contributed by Lys15.

The protein belongs to the glycosyltransferase 1 family. Bacterial/plant glycogen synthase subfamily.

The catalysed reaction is [(1-&gt;4)-alpha-D-glucosyl](n) + ADP-alpha-D-glucose = [(1-&gt;4)-alpha-D-glucosyl](n+1) + ADP + H(+). It participates in glycan biosynthesis; glycogen biosynthesis. Its function is as follows. Synthesizes alpha-1,4-glucan chains using ADP-glucose. This Streptococcus agalactiae serotype III (strain NEM316) protein is Glycogen synthase.